The primary structure comprises 399 residues: MRLETLPSEFQEALPVLEKIKAAGFEAYFVGGSVRDALLQRPIHDVDIASSSYPEETKRIFDRTVDVGIEHGTVLVLENNREYEVTTFRTEDVYVDYRRPSKVSFVRSLEEDLKRRDFTINALALDENGQLIDLFQGLDDLENRILRAVGTPAERFNEDALRIMRGFRFQATLNFDLEQDTLSAMTDCAPLLEKISVERIFIEFDKLLLAPFWRKGLEALLTSGAIEFLPDLKGSRAKLEQLFELDSDFCFSASEQAWAALLLALKTQEVQRFLRIWKTSREFAKRVADIVEIVTIRSERDLTKRDCYDYDIDLLLQAEELRQAQGLAVDFSAIHNLDASLTIHSKQEMVVNGGMLMRDFGFEPGPKLGQILKELEYAIVDGHLPNDLEAIYAYIKEKK.

Residues glycine 32 and arginine 35 each coordinate ATP. Residues glycine 32 and arginine 35 each coordinate CTP. 2 residues coordinate Mg(2+): aspartate 45 and aspartate 47. 5 residues coordinate ATP: arginine 116, aspartate 159, arginine 162, arginine 165, and arginine 168. Residues arginine 116, aspartate 159, arginine 162, arginine 165, and arginine 168 each coordinate CTP.

Belongs to the tRNA nucleotidyltransferase/poly(A) polymerase family. Bacterial CCA-adding enzyme type 3 subfamily. Homodimer. Mg(2+) serves as cofactor.

It carries out the reaction a tRNA precursor + 2 CTP + ATP = a tRNA with a 3' CCA end + 3 diphosphate. The enzyme catalyses a tRNA with a 3' CCA end + 2 CTP + ATP = a tRNA with a 3' CCACCA end + 3 diphosphate. In terms of biological role, catalyzes the addition and repair of the essential 3'-terminal CCA sequence in tRNAs without using a nucleic acid template. Adds these three nucleotides in the order of C, C, and A to the tRNA nucleotide-73, using CTP and ATP as substrates and producing inorganic pyrophosphate. tRNA 3'-terminal CCA addition is required both for tRNA processing and repair. Also involved in tRNA surveillance by mediating tandem CCA addition to generate a CCACCA at the 3' terminus of unstable tRNAs. While stable tRNAs receive only 3'-terminal CCA, unstable tRNAs are marked with CCACCA and rapidly degraded. The chain is CCA-adding enzyme from Streptococcus gordonii (strain Challis / ATCC 35105 / BCRC 15272 / CH1 / DL1 / V288).